A 1707-amino-acid polypeptide reads, in one-letter code: Mediator of DNA damage checkpoint protein 1 (1707 aa).

Positions 1–23 are disordered; that stretch reads MESTQVIDWDAEEEEETELSSGS. The segment at 1–150 is interaction with CHEK2; sequence MESTQVIDWD…PRSLLTIEKT (150 aa). The tract at residues 2–222 is interaction with the MRN complex; the sequence is ESTQVIDWDA…SSPFGLGSDT (221 aa). Threonine 4 carries the post-translational modification Phosphothreonine. The segment covering 9 to 18 has biased composition (acidic residues); it reads WDAEEEEETE. The FHA domain occupies 54–105; the sequence is NVVGRSPDCSVALPFPSISKQHAVIEISAWNKAPILQDCGSLNGTQIVKPPR. Threonine 146 carries the post-translational modification Phosphothreonine. A disordered region spans residues 166–328; sequence ADSEEEGDFP…EERIPVTPPV (163 aa). 2 positions are modified to phosphoserine: serine 168 and serine 176. The span at 183–192 shows a compositional bias: polar residues; the sequence is GQRNTASPSA. 2 positions are modified to phosphoserine: serine 198 and serine 220. Threonine 222 is subject to Phosphothreonine. A compositionally biased stretch (polar residues) spans 252-263; that stretch reads ANGTTAGIQAQP. Residues 264 to 278 are compositionally biased toward basic and acidic residues; the sequence is TEHKLKDTKVKKEAG. Serine 298 is subject to Phosphoserine. Position 300 is a phosphothreonine (threonine 300). Serine 313 bears the Phosphoserine mark. Threonine 315 bears the Phosphothreonine mark. Serine 360 carries the post-translational modification Phosphoserine. Threonine 362 is subject to Phosphothreonine. Over residues 369–378 the composition is skewed to basic and acidic residues; it reads ALDVPLERNH. Residues 369 to 398 form a disordered region; the sequence is ALDVPLERNHTPMVINSDTDEEEEEEEEVS. Residue serine 385 is modified to Phosphoserine. A compositionally biased stretch (acidic residues) spans 386–397; sequence DTDEEEEEEEEV. The residue at position 387 (threonine 387) is a Phosphothreonine. Phosphoserine is present on residues serine 398, serine 415, serine 425, serine 438, and serine 442. Disordered regions lie at residues 417–497, 520–642, 679–699, and 718–746; these read DPGA…PGSH, PGPS…AKEC, LFPC…QTPG, and REQS…HQHL. Residues 425 to 439 show a composition bias toward polar residues; sequence SQPQVLVEQSQSASG. Threonine 444 carries the phosphothreonine modification. Serine 461 is modified (phosphoserine). Position 470 is a phosphothreonine (threonine 470). Residues serine 492, serine 493, serine 591, serine 593, and serine 595 each carry the phosphoserine modification. Residues 580–595 show a composition bias toward polar residues; sequence VSEQESTLEVRSQSGS. Positions 626–642 are enriched in basic and acidic residues; that stretch reads GREREAHVGRTKSAKEC. The segment covering 719-730 has biased composition (basic and acidic residues); the sequence is EQSETSELHEAH. Phosphoserine is present on residues serine 735 and serine 750. Lysine 769 carries the post-translational modification N6-acetyllysine. Basic and acidic residues-rich tracts occupy residues 778–804, 812–868, and 875–889; these read ADRM…RDVI, TKDR…REWE, and TPDR…HDQK. Disordered stretches follow at residues 778–899 and 914–1510; these read ADRM…TLKP and IITG…QETA. Residues serine 885, serine 929, and serine 962 each carry the phosphoserine modification. Residues 968–986 show a composition bias toward low complexity; sequence STQSLLTSQSQKQSTPQPL. The residue at position 991 (serine 991) is a Phosphoserine. Composition is skewed to polar residues over residues 1026-1056, 1068-1086, and 1101-1113; these read PNTT…STRT, QPST…SQVT, and EIQS…QSVT. Phosphothreonine is present on threonine 1056. Phosphoserine occurs at positions 1104, 1126, and 1128. Residues threonine 1132, threonine 1173, and threonine 1234 each carry the phosphothreonine modification. Polar residues-rich tracts occupy residues 1225–1241, 1265–1281, 1295–1308, and 1317–1326; these read PLTS…TSRA, PSTS…SSQA, VPTT…TSKK, and LVTQGRTYKP. Phosphothreonine is present on residues threonine 1297 and threonine 1298. At serine 1327 the chain carries Phosphoserine. A compositionally biased stretch (polar residues) spans 1343–1363; sequence PSTSTDHLVTPKVTDQSLTLQ. Threonine 1352 bears the Phosphothreonine mark. A Phosphoserine modification is found at serine 1359. Residues 1364 to 1376 are compositionally biased toward low complexity; sequence SSPLSASPVSSTP. A Phosphothreonine modification is found at threonine 1375. The segment covering 1378-1393 has biased composition (pro residues); sequence LKPPVPIAQPVTPEPI. A Glycyl lysine isopeptide (Lys-Gly) (interchain with G-Cter in SUMO2) cross-link involves residue lysine 1418. A compositionally biased stretch (low complexity) spans 1421–1441; sequence SALSEPEPQSSASQSSGASEA. 4 positions are modified to phosphoserine: serine 1435, serine 1436, serine 1439, and serine 1443. Basic and acidic residues predominate over residues 1459–1473; it reads VIKEEPVETEVKEEP. Lysine 1461 is covalently cross-linked (Glycyl lysine isopeptide (Lys-Gly) (interchain with G-Cter in SUMO1); alternate). A Glycyl lysine isopeptide (Lys-Gly) (interchain with G-Cter in SUMO2); alternate cross-link involves residue lysine 1461. At threonine 1480 the chain carries Phosphothreonine. The segment covering 1481–1493 has biased composition (basic and acidic residues); sequence PEKRKRDHAEEVT. Lysine 1496 carries the post-translational modification N6-acetyllysine. BRCT domains are found at residues 1510-1588 and 1609-1700; these read APKV…DYLV and RERR…FVLS.

In terms of assembly, homodimer. Interacts with H2AX, which requires phosphorylation of H2AX on 'Ser-139'. Interacts with the MRN complex, composed of MRE11, RAD50, and NBN. Interacts with CHEK2, which requires ATM-mediated phosphorylation of 'Thr-68' within the FHA domain of CHEK2. Interacts constitutively with the BRCA1-BARD1 complex, SMC1A and TP53BP1. Interacts with ATM and FANCD2, and these interactions are reduced upon DNA damage. Also interacts with the PRKDC complex, composed of XRCC6/KU70, XRCC5/KU80 and PRKDC/XRCC7. This interaction may be required for PRKDC autophosphorylation, which is essential for DNA double strand break (DSB) repair. When phosphorylated by ATM, interacts with RNF8 (via FHA domain). Interacts with CEP164. When phosphorylated, interacts with APTX (via FHA-like domain). Interacts (when phosphorylated) with TOPBP1; promoting TOPBP1 localization to DNA damage sites during mitosis. Interacts (when phosphorylated) with NBN; promoting NBN and MRN complex localization to DNA damage sites. Phosphorylated upon exposure to ionizing radiation (IR), ultraviolet radiation (UV), and hydroxyurea (HU). Phosphorylation in response to IR requires ATM, NBN, and possibly CHEK2. Also phosphorylated during the G2/M phase of the cell cycle and during activation of the mitotic spindle checkpoint. Phosphorylation at Thr-4 by ATM stabilizes and enhances homodimerization via the FHA domain. Phosphorylated at Ser-168 and Ser-198 by CK2 in response to DNA damage during mitosis, promoting interaction with TOPBP1. Phosphorylated by CK2 in response to DNA damage, promoting interaction with NBN and recruitment of the MRN complex to DNA damage sites. In terms of processing, sumoylation at Lys-1461 by PIAS4 following DNA damage promotes ubiquitin-mediated degradation. Post-translationally, ubiquitinated by RNF4, leading to proteasomal degradation; undergoes 'Lys-48'-linked polyubiquitination.

The protein resides in the nucleus. The protein localises to the chromosome. Its function is as follows. Histone reader protein required for checkpoint-mediated cell cycle arrest in response to DNA damage within both the S phase and G2/M phases of the cell cycle. Specifically recognizes and binds histone H2AX phosphorylated at 'Ser-139', a marker of DNA damage, serving as a scaffold for the recruitment of DNA repair and signal transduction proteins to discrete foci of DNA damage sites. Also required for downstream events subsequent to the recruitment of these proteins. These include phosphorylation and activation of the ATM, CHEK1 and CHEK2 kinases, and stabilization of TP53/p53 and apoptosis. ATM and CHEK2 may also be activated independently by a parallel pathway mediated by TP53BP1. Required for chromosomal stability during mitosis by promoting recruitment of TOPBP1 to DNA double strand breaks (DSBs): TOPBP1 forms filamentous assemblies that bridge MDC1 and tether broken chromosomes during mitosis. Required for the repair of DSBs via homologous recombination by promoting recruitment of NBN component of the MRN complex to DSBs. In Mus musculus (Mouse), this protein is Mediator of DNA damage checkpoint protein 1 (Mdc1).